Consider the following 396-residue polypeptide: Glyceraldehyde-3-phosphate dehydrogenase GAPA1, chloroplastic (396 aa).

The N-terminal 60 residues, 1 to 60, are a transit peptide targeting the chloroplast; that stretch reads MASVTFSVPKGFTEFSGLRSSSASLPFGKKLSSDEFVSIVSFQTSAMGSSGGYRKGVTEA. NADP(+) contacts are provided by residues 71–72, Asp95, and Arg140; that span reads RI. D-glyceraldehyde 3-phosphate is bound by residues 212 to 214, Thr243, Arg258, 271 to 272, and Arg294; these read SCT and TG. The active-site Nucleophile is Cys213. Asn376 contributes to the NADP(+) binding site.

Belongs to the glyceraldehyde-3-phosphate dehydrogenase family. In terms of assembly, tetramer of either four A chains (GAPDH 2) or two A and two B chains (GAPDH 1). As to expression, expressed in leaves and stems.

It localises to the plastid. The protein resides in the chloroplast membrane. It is found in the chloroplast stroma. It carries out the reaction D-glyceraldehyde 3-phosphate + phosphate + NADP(+) = (2R)-3-phospho-glyceroyl phosphate + NADPH + H(+). Its pathway is carbohydrate biosynthesis; Calvin cycle. In terms of biological role, involved in the photosynthetic reductive pentose phosphate pathway (Calvin-Benson cycle). Catalyzes the reduction of 1,3-diphosphoglycerate by NADPH. The polypeptide is Glyceraldehyde-3-phosphate dehydrogenase GAPA1, chloroplastic (GAPA1) (Arabidopsis thaliana (Mouse-ear cress)).